Here is a 48-residue protein sequence, read N- to C-terminus: Histone H4 (48 aa).

Positions 1 to 14 (MGGKGGKGGKGLGK) are enriched in gly residues. The disordered stretch occupies residues 1–23 (MGGKGGKGGKGLGKVGAKKRHSR).

This sequence belongs to the histone H4 family. The nucleosome is a histone octamer containing two molecules each of H2A, H2B, H3 and H4 assembled in one H3-H4 heterotetramer and two H2A-H2B heterodimers. The octamer wraps approximately 147 bp of DNA.

It localises to the nucleus. Its subcellular location is the chromosome. In terms of biological role, core component of nucleosome. Nucleosomes wrap and compact DNA into chromatin, limiting DNA accessibility to the cellular machineries which require DNA as a template. Histones thereby play a central role in transcription regulation, DNA repair, DNA replication and chromosomal stability. DNA accessibility is regulated via a complex set of post-translational modifications of histones, also called histone code, and nucleosome remodeling. This is Histone H4 from Blepharisma japonicum.